Consider the following 317-residue polypeptide: Actin-related protein 2/3 complex subunit 2 (317 aa).

It belongs to the ARPC2 family. Component of the Arp2/3 complex composed of arp2, act2, arc1/p41-ARC, arc2/p34-ARC, arc3/p21-ARC, arc4/p20-ARC and arc5/p16-ARC.

It is found in the cytoplasm. The protein localises to the cytoskeleton. It localises to the actin patch. Functions as actin-binding component of the Arp2/3 complex which is involved in regulation of actin polymerization and together with an activating nucleation-promoting factor (NPF) mediates the formation of branched actin networks. Seems to contact the mother actin filament. This Schizosaccharomyces pombe (strain 972 / ATCC 24843) (Fission yeast) protein is Actin-related protein 2/3 complex subunit 2 (arc2).